Consider the following 341-residue polypeptide: Ketol-acid reductoisomerase (NADP(+)) (341 aa).

The region spanning 2–182 is the KARI N-terminal Rossmann domain; sequence AKIYYNDDAD…GGTRAGVIET (181 aa). Residues 25–28, S51, S53, and 83–86 contribute to the NADP(+) site; these read YGSQ and DQVQ. H108 is a catalytic residue. G134 serves as a coordination point for NADP(+). The 146-residue stretch at 183-328 folds into the KARI C-terminal knotted domain; that stretch reads TFTEETESDL…RKLRSLFAWE (146 aa). The Mg(2+) site is built by D191, E195, E227, and E231. S252 is a substrate binding site.

The protein belongs to the ketol-acid reductoisomerase family. Mg(2+) serves as cofactor.

The catalysed reaction is (2R)-2,3-dihydroxy-3-methylbutanoate + NADP(+) = (2S)-2-acetolactate + NADPH + H(+). It catalyses the reaction (2R,3R)-2,3-dihydroxy-3-methylpentanoate + NADP(+) = (S)-2-ethyl-2-hydroxy-3-oxobutanoate + NADPH + H(+). It functions in the pathway amino-acid biosynthesis; L-isoleucine biosynthesis; L-isoleucine from 2-oxobutanoate: step 2/4. The protein operates within amino-acid biosynthesis; L-valine biosynthesis; L-valine from pyruvate: step 2/4. Its function is as follows. Involved in the biosynthesis of branched-chain amino acids (BCAA). Catalyzes an alkyl-migration followed by a ketol-acid reduction of (S)-2-acetolactate (S2AL) to yield (R)-2,3-dihydroxy-isovalerate. In the isomerase reaction, S2AL is rearranged via a Mg-dependent methyl migration to produce 3-hydroxy-3-methyl-2-ketobutyrate (HMKB). In the reductase reaction, this 2-ketoacid undergoes a metal-dependent reduction by NADPH to yield (R)-2,3-dihydroxy-isovalerate. This chain is Ketol-acid reductoisomerase (NADP(+)), found in Kocuria rhizophila (strain ATCC 9341 / DSM 348 / NBRC 103217 / DC2201).